The chain runs to 276 residues: Phosphatidylglycerol--prolipoprotein diacylglyceryl transferase (276 aa).

7 helical membrane-spanning segments follow: residues 17 to 37 (FGPF…VLGW), 59 to 79 (FLSW…ILFY), 94 to 114 (VWDG…AILI), 132 to 152 (VPVP…GELW), 177 to 197 (PSEL…LLIA), 208 to 225 (GYLG…RTTA), and 235 to 255 (LGYL…MIVI). R142 contributes to the a 1,2-diacyl-sn-glycero-3-phospho-(1'-sn-glycerol) binding site.

It belongs to the Lgt family.

The protein localises to the cell inner membrane. The enzyme catalyses L-cysteinyl-[prolipoprotein] + a 1,2-diacyl-sn-glycero-3-phospho-(1'-sn-glycerol) = an S-1,2-diacyl-sn-glyceryl-L-cysteinyl-[prolipoprotein] + sn-glycerol 1-phosphate + H(+). The protein operates within protein modification; lipoprotein biosynthesis (diacylglyceryl transfer). Functionally, catalyzes the transfer of the diacylglyceryl group from phosphatidylglycerol to the sulfhydryl group of the N-terminal cysteine of a prolipoprotein, the first step in the formation of mature lipoproteins. The polypeptide is Phosphatidylglycerol--prolipoprotein diacylglyceryl transferase (Acidiphilium cryptum (strain JF-5)).